The following is a 579-amino-acid chain: Alpha-longipinene synthase (579 aa).

Residues D332, D336, D476, and N484 each coordinate Mg(2+). A DDXXD motif motif is present at residues 332–336; sequence DDLYD.

This sequence belongs to the terpene synthase family. Tpsd subfamily. Mg(2+) serves as cofactor. It depends on Mn(2+) as a cofactor.

It catalyses the reaction (2E,6E)-farnesyl diphosphate = alpha-longipinene + diphosphate. Its pathway is sesquiterpene biosynthesis. The protein operates within terpene metabolism; oleoresin biosynthesis. Functionally, terpene synthase (TPS) involved in the biosynthesis of sesquiterpene natural products included in conifer oleoresin secretions and volatile emissions; these compounds contribute to biotic and abiotic stress defense against herbivores and pathogens. Catalyzes the conversion of (2E,6E)-farnesyl diphosphate (FPP) to alpha-longipinene. The polypeptide is Alpha-longipinene synthase (Picea sitchensis (Sitka spruce)).